Reading from the N-terminus, the 410-residue chain is Testis-specific protein TEX28 (410 aa).

Residues 1–43 (MVLKAEHTRSPSATLPSNVPSCRSLSSSEDGPSGPSSLADGGL) are disordered. Residues 10 to 23 (SPSATLPSNVPSCR) are compositionally biased toward polar residues. A compositionally biased stretch (low complexity) spans 24–38 (SLSSSEDGPSGPSSL). A coiled-coil region spans residues 93–128 (QAFEKVNQRASATIAQIEHRLHQCHQQLQELEEGCR). The segment at 137–164 (ESDPANCEPPSEKALLSEPPEPGGEDGP) is disordered. The stretch at 185–245 (QGTCLETEDV…LLLESLQEEK (61 aa)) forms a coiled coil. A helical transmembrane segment spans residues 336-358 (LSLATVLLVFVSTLCACPSSLIS).

This sequence belongs to the TEX28 family. In terms of tissue distribution, testis specific.

The protein localises to the membrane. This is Testis-specific protein TEX28 (TEX28) from Homo sapiens (Human).